Reading from the N-terminus, the 339-residue chain is Phenylalanine--tRNA ligase alpha subunit (339 aa).

E250 contributes to the Mg(2+) binding site.

It belongs to the class-II aminoacyl-tRNA synthetase family. Phe-tRNA synthetase alpha subunit type 1 subfamily. Tetramer of two alpha and two beta subunits. Mg(2+) is required as a cofactor.

It is found in the cytoplasm. The catalysed reaction is tRNA(Phe) + L-phenylalanine + ATP = L-phenylalanyl-tRNA(Phe) + AMP + diphosphate + H(+). The chain is Phenylalanine--tRNA ligase alpha subunit from Parabacteroides distasonis (strain ATCC 8503 / DSM 20701 / CIP 104284 / JCM 5825 / NCTC 11152).